The primary structure comprises 147 residues: Hemoglobin subunit delta (147 aa).

The Globin domain occupies 3 to 147 (NLTAAEKTQV…VANALAHKYH (145 aa)). His64 and His93 together coordinate heme b.

Belongs to the globin family. In terms of assembly, heterotetramer of two delta chains and two alpha chains. In terms of tissue distribution, red blood cells.

This chain is Hemoglobin subunit delta (HBD), found in Elephas maximus (Indian elephant).